The chain runs to 965 residues: Sarcosine oxidase subunit alpha (965 aa).

A139, D158, E159, R160, T166, V205, A418, L423, and T425 together coordinate NAD(+). Residues T692 and E784 each coordinate (6R)-5,10-methylene-5,6,7,8-tetrahydrofolate.

The protein belongs to the GcvT family. Heterotetramer composed of subunits alpha (SoxA), beta (SoxB), gamma (SoxG) and delta (SoxD). NAD(+) is required as a cofactor.

The protein localises to the cytoplasm. It carries out the reaction sarcosine + (6S)-5,6,7,8-tetrahydrofolate + O2 = (6R)-5,10-methylene-5,6,7,8-tetrahydrofolate + glycine + H2O2. It catalyses the reaction sarcosine + O2 + H2O = formaldehyde + glycine + H2O2. With respect to regulation, inhibited by Zn(2+), Cu(2+), Cd(2+), Hg(2+), Ag(+), p-chloromercuribenzoate (p-CMB), iodoacetamide, N-ethylmaleimide, CN(-), o-phenanthroline and sodium lauryl sulfate. Functionally, in the presence of tetrahydrofolate, catalyzes the oxidative demethylation of sarcosine to yield glycine, 5,10-methylenetetrahydrofolate and hydrogen peroxide. In the absence of tetrahydrofolate, catalyzes the oxidative demethylation of sarcosine to yield glycine, formaldehyde and hydrogen peroxide. Can also use N-methyl-L-alanine and N-ethyl-L-glycine. Is very specific for oxygen as an acceptor. In Corynebacterium sp. (strain U-96), this protein is Sarcosine oxidase subunit alpha.